The primary structure comprises 217 residues: Nucleolar protein 12 (217 aa).

A coiled-coil region spans residues Gly-34–Gln-98. The interval Leu-122–Glu-217 is disordered. Residues Gly-130–Ser-141 are compositionally biased toward acidic residues. Composition is skewed to basic residues over residues Ala-172 to Arg-184 and Lys-201 to Glu-217.

The protein belongs to the RRP17 family. Interacts with KIAA1191. Expressed in brain, lung, spleen, kidney and heart.

Its subcellular location is the nucleus. It is found in the nucleolus. It localises to the cytoplasm. Functionally, multifunctional RNA binding protein that plays a role in RNA metabolism and DNA maintenance. Participates in the resolution of DNA stress and the maintenance of genome integrity by localizing to sites of DNA insults. Also plays a role in proper nucleolar organization by limiting nucleolar size and regulating nucleolar number. Mechanistically, regulates the nucleolar levels of fibrillarin and nucleolin, two key players in pre-rRNA processing and ribosome assembly. The protein is Nucleolar protein 12 (Nol12) of Mus musculus (Mouse).